Reading from the N-terminus, the 344-residue chain is Dihydroorotase (344 aa).

Zn(2+) is bound by residues His-13 and His-15. Residues 15-17 and Asn-41 each bind substrate; that span reads HLR. Lys-98, His-135, and His-173 together coordinate Zn(2+). Lys-98 is modified (N6-carboxylysine). His-135 contributes to the substrate binding site. Residue Leu-218 participates in substrate binding. Zn(2+) is bound at residue Asp-247. The active site involves Asp-247. The substrate site is built by His-251 and Ala-263.

This sequence belongs to the metallo-dependent hydrolases superfamily. DHOase family. Class II DHOase subfamily. Homodimer. It depends on Zn(2+) as a cofactor.

The catalysed reaction is (S)-dihydroorotate + H2O = N-carbamoyl-L-aspartate + H(+). The protein operates within pyrimidine metabolism; UMP biosynthesis via de novo pathway; (S)-dihydroorotate from bicarbonate: step 3/3. Its function is as follows. Catalyzes the reversible cyclization of carbamoyl aspartate to dihydroorotate. This chain is Dihydroorotase, found in Neisseria meningitidis serogroup C (strain 053442).